A 461-amino-acid chain; its full sequence is Photosystem II CP43 reaction center protein (461 aa).

The propeptide occupies 1-2 (ME). The residue at position 3 (threonine 3) is an N-acetylthreonine. Position 3 is a phosphothreonine (threonine 3). The next 5 helical transmembrane spans lie at 57-81 (LFEVAHFVPEKPMYEQGLILLPHLA), 122-143 (LLGPETLEESFPFFGYVWKDRN), 166-188 (KALYFGGVYDTWAPGGGDVRKIT), 243-263 (KPFAWARRALVWSGEAYLSYS), and 279-300 (WFNNTAYPSEFYGPTGPEASQA). Glutamate 355 serves as a coordination point for [CaMn4O5] cluster. A helical membrane pass occupies residues 435–459 (RARAAAAGFEKGIDRDFEPVLSMTP).

It belongs to the PsbB/PsbC family. PsbC subfamily. In terms of assembly, PSII is composed of 1 copy each of membrane proteins PsbA, PsbB, PsbC, PsbD, PsbE, PsbF, PsbH, PsbI, PsbJ, PsbK, PsbL, PsbM, PsbT, PsbX, PsbY, PsbZ, Psb30/Ycf12, at least 3 peripheral proteins of the oxygen-evolving complex and a large number of cofactors. It forms dimeric complexes. Binds multiple chlorophylls and provides some of the ligands for the Ca-4Mn-5O cluster of the oxygen-evolving complex. It may also provide a ligand for a Cl- that is required for oxygen evolution. PSII binds additional chlorophylls, carotenoids and specific lipids. serves as cofactor.

The protein resides in the plastid. The protein localises to the chloroplast thylakoid membrane. One of the components of the core complex of photosystem II (PSII). It binds chlorophyll and helps catalyze the primary light-induced photochemical processes of PSII. PSII is a light-driven water:plastoquinone oxidoreductase, using light energy to abstract electrons from H(2)O, generating O(2) and a proton gradient subsequently used for ATP formation. The chain is Photosystem II CP43 reaction center protein from Platanus occidentalis (Sycamore).